The following is a 220-amino-acid chain: Ribose-5-phosphate isomerase A (220 aa).

Residues 28–31 (TGST), 81–84 (DGAD), and 94–97 (KGGG) contribute to the substrate site. Glu103 serves as the catalytic Proton acceptor. A substrate-binding site is contributed by Lys121.

The protein belongs to the ribose 5-phosphate isomerase family. As to quaternary structure, homodimer.

The enzyme catalyses aldehydo-D-ribose 5-phosphate = D-ribulose 5-phosphate. The protein operates within carbohydrate degradation; pentose phosphate pathway; D-ribose 5-phosphate from D-ribulose 5-phosphate (non-oxidative stage): step 1/1. In terms of biological role, catalyzes the reversible conversion of ribose-5-phosphate to ribulose 5-phosphate. This is Ribose-5-phosphate isomerase A from Yersinia enterocolitica serotype O:8 / biotype 1B (strain NCTC 13174 / 8081).